Consider the following 544-residue polypeptide: Methyl-accepting chemotaxis protein McpP (544 aa).

Helical transmembrane passes span 12 to 32 (RLWL…LLML), 50 to 70 (VVQT…AGTL), and 192 to 212 (DASL…MLIA). The HAMP domain maps to 213–267 (RSIARPLQEAVQAMGNIASGESDLTRRLDTHGSDEITHLGEHFNRFNGKLQGVVG). In terms of domain architecture, Methyl-accepting transducer spans 272–508 (AAHALAQSAG…EINRNVLDTA (237 aa)).

Belongs to the methyl-accepting chemotaxis (MCP) protein family.

It localises to the cell membrane. Its function is as follows. Chemotactic-signal transducers respond to changes in the concentration of attractants and repellents in the environment, transduce a signal from the outside to the inside of the cell, and facilitate sensory adaptation through the variation of the level of methylation. McpP is a chemoreceptor that responds specifically to some C2 and C3 carboxylic acids. Recognizes acetate, pyruvate, propionate, and L-lactate. The polypeptide is Methyl-accepting chemotaxis protein McpP (Pseudomonas putida (strain ATCC 47054 / DSM 6125 / CFBP 8728 / NCIMB 11950 / KT2440)).